The primary structure comprises 332 residues: 2-hydroxyacid dehydrogenase homolog 2 (332 aa).

NAD(+)-binding positions include 154–155 (KI), 233–235 (TSR), and D259. Residue R235 is part of the active site. Residue E264 is part of the active site. H296 acts as the Proton donor in catalysis. Position 296-299 (296-299 (HQAF)) interacts with NAD(+).

It belongs to the D-isomer specific 2-hydroxyacid dehydrogenase family.

The protein localises to the cytoplasm. It localises to the nucleus. The polypeptide is 2-hydroxyacid dehydrogenase homolog 2 (Schizosaccharomyces pombe (strain 972 / ATCC 24843) (Fission yeast)).